We begin with the raw amino-acid sequence, 295 residues long: Aquaporin-9 (295 aa).

The Cytoplasmic segment spans residues 1-24; it reads MPSEKDRAKKNLVQRLALKSCLAK. A helical transmembrane segment spans residues 25–43; sequence ETLSEFLGTFIMIVLGCGS. The Extracellular segment spans residues 44–57; sequence IAQAVLSREKAGGI. The chain crosses the membrane as a helical span at residues 58 to 77; it reads ITINIGFATAVVMALYATFG. Residues 78–79 lie on the Cytoplasmic side of the membrane; the sequence is VS. The segment at residues 80-92 is an intramembrane region (discontinuously helical); sequence GGHINPAVSFAMC. An NPA 1 motif is present at residues 84 to 86; the sequence is NPA. Residues 93–98 lie on the Cytoplasmic side of the membrane; the sequence is TFGRME. The helical transmembrane segment at 99 to 123 threads the bilayer; sequence WFKFPFYVGAQLLGAFVGAATVFGI. The Extracellular segment spans residues 124-160; sequence YYDGLMAFADGKLLITGENGTAFIFATYPKPFVSVPG. Residues 161–178 traverse the membrane as a helical segment; it reads AFVDQVVSTMFLLLIVFA. Topologically, residues 179-190 are cytoplasmic; the sequence is IFDSRNLGVPRG. A helical transmembrane segment spans residues 191–207; sequence LEPIVIGLLIIVISCSL. Topologically, residues 208-210 are extracellular; sequence GLN. The segment at residues 211 to 225 is an intramembrane region (discontinuously helical); sequence SGCAMNPARDLSPRL. The NPA 2 signature appears at 216-218; the sequence is NPA. Over 226-243 the chain is Extracellular; the sequence is FTALAGWGFEVFTFGNNF. A helical membrane pass occupies residues 244-264; the sequence is WWIPVVGPMIGAVLGGLIYVL. Over 265–295 the chain is Cytoplasmic; that stretch reads FIQMHHSNPDPEVKAEPAENNLEKHELSVIM.

Belongs to the MIP/aquaporin (TC 1.A.8) family. As to quaternary structure, homotetramer; each monomer provides an independent glycerol/water pore.

The protein resides in the cell membrane. It is found in the basolateral cell membrane. It catalyses the reaction glycerol(in) = glycerol(out). The enzyme catalyses H2O(in) = H2O(out). It carries out the reaction urea(in) = urea(out). The catalysed reaction is (S)-lactate(in) = (S)-lactate(out). It catalyses the reaction NH4(+)(in) = NH4(+)(out). The enzyme catalyses uracil(in) = uracil(out). It carries out the reaction adenine(out) = adenine(in). The catalysed reaction is 3-hydroxybutanoate(in) = 3-hydroxybutanoate(out). It catalyses the reaction D-sorbitol(in) = D-sorbitol(out). The enzyme catalyses D-mannitol(in) = D-mannitol(out). It carries out the reaction H2O2(out) = H2O2(in). The catalysed reaction is arsenite(in) = arsenite(out). It catalyses the reaction selenite(in) = selenite(out). Aquaglyceroporins form homotetrameric transmembrane channels, with each monomer independently mediating glycerol and water transport across the plasma membrane along their osmotic gradient. AQP9 is the primary route for glycerol uptake in hepatocytes, supporting hepatic gluconeogenesis. It exhibits broad specificity and may transport various small, non-charged solutes, including carbamides, polyols, purines, and pyrimidines. AQP9 may also facilitate hepatic urea extrusion. Due to its permeability to lactate, AQP9 might participate in the astrocyte-to-neuron lactate shuttle, supplying neurons with energy. Additionally, AQP9 is permeable to arsenite, contributing to arsenic excretion by the liver and providing partial protection against arsenic toxicity. It is also permeable to H2O2 in vivo. Could also be permeable to ammonium. The protein is Aquaporin-9 of Mus musculus (Mouse).